The sequence spans 333 residues: Cap-specific mRNA (nucleoside-2'-O-)-methyltransferase (333 aa).

Tyr-22 contacts mRNA. Residues Gln-39, Tyr-66, Gly-68, Gly-72, Asp-95, Arg-97, Val-116, and Asp-138 each contribute to the S-adenosyl-L-methionine site. A binding to NPH-I region spans residues 169–249 (PVASSLKWRC…NKIVRNKVVV (81 aa)). The binding to Rap94 stretch occupies residues 169 to 333 (PVASSLKWRC…NSKRSVRGNK (165 aa)). The For methyltransferase activity role is filled by Lys-175. MRNA is bound by residues 177–180 (RCPF), Asp-182, 205–207 (SAE), and Glu-233.

The protein belongs to the class I-like SAM-binding methyltransferase superfamily. Poxvirus/kinetoplastid 2'-O-MTase family. In terms of assembly, interacts with poly(A) polymerase catalytic subunit OPG063. Interacts with OPG109 and OPG123; these interactions might help linking transcription to capping and polyadenylation.

The protein localises to the virion. It carries out the reaction a 5'-end (N(7)-methyl 5'-triphosphoguanosine)-ribonucleoside in mRNA + S-adenosyl-L-methionine = a 5'-end (N(7)-methyl 5'-triphosphoguanosine)-(2'-O-methyl-ribonucleoside) in mRNA + S-adenosyl-L-homocysteine + H(+). Functionally, displays methyltransferase, positive regulation of the poly(A) polymerase and transcription elongation activities. Involved in the modification of both mRNA ends and in intermediate and late gene positive transcription elongation. At the mRNAs 5' end, methylates the ribose 2' OH group of the first transcribed nucleotide, thereby producing a 2'-O-methylpurine cap. At the 3' end, functions as a processivity factor which stimulates the activity of the viral poly(A) polymerase OPG063 that creates mRNA's poly(A) tail. In the presence of OPG102, OPG063 does not dissociate from the RNA allowing tail elongation to around 250 adenylates. This Homo sapiens (Human) protein is Cap-specific mRNA (nucleoside-2'-O-)-methyltransferase (OPG102).